The primary structure comprises 430 residues: MTRSEALFEQAKKTIPGGVNSPVRAFNGVGGSPLFIEKADGAYIYDADGKAYIDYVGSWGPMILGHNHPKIREAVLAAVHNGLSFGAPTELEVQMAEKVIAMVPSIEQVRMVSSGTEATMSAIRLARGFTNRDKILKFEGCYHGHADCLLVKAGSGALTLGQPSSPGIPEDFAKHTLTAVYNDLDSVRSLFEQYPTEISCIIIEPVAGNMNCIPPIPGFLEGLRSLCDEFGALLIIDEVMTGFRVSKSGAQGHYGVTPDLTTLGKVIGGGMPVGAFGGRKDVMQFIAPTGPVYQAGTLSGNPIAMSAGLAQMEALCEEGLYEALSAKTKRIAEGFKAAADKHGIPMAINYVGGMFGFFFTEQEHITRFDQVTKCNIEHFRTFYHGMLDEGVYLAPSAYEAGFLSMAHGEEELRLTLEAADRVLARMKAAN.

Lys-265 carries the N6-(pyridoxal phosphate)lysine modification.

The protein belongs to the class-III pyridoxal-phosphate-dependent aminotransferase family. HemL subfamily. Homodimer. Requires pyridoxal 5'-phosphate as cofactor.

Its subcellular location is the cytoplasm. The catalysed reaction is (S)-4-amino-5-oxopentanoate = 5-aminolevulinate. It functions in the pathway porphyrin-containing compound metabolism; protoporphyrin-IX biosynthesis; 5-aminolevulinate from L-glutamyl-tRNA(Glu): step 2/2. This Shewanella oneidensis (strain ATCC 700550 / JCM 31522 / CIP 106686 / LMG 19005 / NCIMB 14063 / MR-1) protein is Glutamate-1-semialdehyde 2,1-aminomutase.